The following is a 196-amino-acid chain: Imidazole glycerol phosphate synthase subunit HisH (196 aa).

Residues asparagine 2–cysteine 196 form the Glutamine amidotransferase type-1 domain. The active-site Nucleophile is the cysteine 77. Residues histidine 175 and glutamate 177 contribute to the active site.

In terms of assembly, heterodimer of HisH and HisF.

It localises to the cytoplasm. It carries out the reaction 5-[(5-phospho-1-deoxy-D-ribulos-1-ylimino)methylamino]-1-(5-phospho-beta-D-ribosyl)imidazole-4-carboxamide + L-glutamine = D-erythro-1-(imidazol-4-yl)glycerol 3-phosphate + 5-amino-1-(5-phospho-beta-D-ribosyl)imidazole-4-carboxamide + L-glutamate + H(+). The enzyme catalyses L-glutamine + H2O = L-glutamate + NH4(+). The protein operates within amino-acid biosynthesis; L-histidine biosynthesis; L-histidine from 5-phospho-alpha-D-ribose 1-diphosphate: step 5/9. IGPS catalyzes the conversion of PRFAR and glutamine to IGP, AICAR and glutamate. The HisH subunit catalyzes the hydrolysis of glutamine to glutamate and ammonia as part of the synthesis of IGP and AICAR. The resulting ammonia molecule is channeled to the active site of HisF. The protein is Imidazole glycerol phosphate synthase subunit HisH of Idiomarina loihiensis (strain ATCC BAA-735 / DSM 15497 / L2-TR).